We begin with the raw amino-acid sequence, 98 residues long: NADH-quinone oxidoreductase subunit K (98 aa).

The next 3 helical transmembrane spans lie at 1-21, 27-47, and 59-79; these read MGHLLGLGAVLFCISLAGIFL, IVLLMSIELMLLSVNVNFIAF, and FVFFILTVAAAEAAIGLAILV.

The protein belongs to the complex I subunit 4L family. As to quaternary structure, NDH-1 is composed of 14 different subunits. Subunits NuoA, H, J, K, L, M, N constitute the membrane sector of the complex.

The protein resides in the cell inner membrane. It catalyses the reaction a quinone + NADH + 5 H(+)(in) = a quinol + NAD(+) + 4 H(+)(out). Its function is as follows. NDH-1 shuttles electrons from NADH, via FMN and iron-sulfur (Fe-S) centers, to quinones in the respiratory chain. The immediate electron acceptor for the enzyme in this species is believed to be ubiquinone. Couples the redox reaction to proton translocation (for every two electrons transferred, four hydrogen ions are translocated across the cytoplasmic membrane), and thus conserves the redox energy in a proton gradient. This chain is NADH-quinone oxidoreductase subunit K, found in Xanthomonas oryzae pv. oryzae (strain PXO99A).